A 206-amino-acid polypeptide reads, in one-letter code: Large ribosomal subunit protein uL4 (206 aa).

The disordered stretch occupies residues 46 to 77 (GTRAQKDREQVRHSTKKPFKQKGTGRARAGMT). Over residues 58–70 (HSTKKPFKQKGTG) the composition is skewed to basic residues.

This sequence belongs to the universal ribosomal protein uL4 family. In terms of assembly, part of the 50S ribosomal subunit.

Its function is as follows. One of the primary rRNA binding proteins, this protein initially binds near the 5'-end of the 23S rRNA. It is important during the early stages of 50S assembly. It makes multiple contacts with different domains of the 23S rRNA in the assembled 50S subunit and ribosome. Functionally, forms part of the polypeptide exit tunnel. This chain is Large ribosomal subunit protein uL4, found in Polaromonas sp. (strain JS666 / ATCC BAA-500).